Here is a 38-residue protein sequence, read N- to C-terminus: Large ribosomal subunit protein bL36 (38 aa).

The protein belongs to the bacterial ribosomal protein bL36 family.

The protein is Large ribosomal subunit protein bL36 of Hahella chejuensis (strain KCTC 2396).